Reading from the N-terminus, the 372-residue chain is Peroxisomal biogenesis factor 3 (372 aa).

Over 1–15 the chain is Cytoplasmic; it reads MLRSMWNFLKRHKKK. The segment at 1–45 is targeting to peroxisomes; it reads MLRSMWNFLKRHKKKCIFLGTVLGGVYILGKYGQKKLREIQEREA. A helical membrane pass occupies residues 16–36; that stretch reads CIFLGTVLGGVYILGKYGQKK. Residues 37-116 are Peroxisomal-facing; the sequence is LREIQEREAA…LKIISFTRSI (80 aa). Residues 117 to 140 form a helical membrane-spanning segment; that stretch reads VAVYSTCMLVVLLRVQLNIIGGYI. The interaction with PEX19 stretch occupies residues 120 to 136; it reads YSTCMLVVLLRVQLNII. At 141–372 the chain is on the cytoplasmic side; sequence YLDNATVGKN…AFSTPQQLEK (232 aa).

It belongs to the peroxin-3 family. As to quaternary structure, interacts with PEX19.

The protein resides in the peroxisome membrane. Involved in peroxisome biosynthesis and integrity. Assembles membrane vesicles before the matrix proteins are translocated. As a docking factor for PEX19, is necessary for the import of peroxisomal membrane proteins in the peroxisomes. This chain is Peroxisomal biogenesis factor 3 (Pex3), found in Rattus norvegicus (Rat).